A 947-amino-acid polypeptide reads, in one-letter code: Pyruvate, phosphate dikinase 1, chloroplastic (947 aa).

A chloroplast-targeting transit peptide spans 1 to 71; that stretch reads MPSVSRAVCV…PLRAVAAPIP (71 aa). The segment at 39 to 60 is disordered; it reads RHGKPEVAIRSGSGGSARGGHC. Thr-527 carries the phosphothreonine; by PDRP1 modification. Residue His-529 is the Tele-phosphohistidine intermediate of the active site. Residues Arg-635, Arg-692, Glu-821, Gly-842, Thr-843, Asn-844, and Asp-845 each contribute to the substrate site. Position 821 (Glu-821) interacts with Mg(2+). Asp-845 contributes to the Mg(2+) binding site. Cys-907 (proton donor) is an active-site residue.

The protein belongs to the PEP-utilizing enzyme family. Homotetramer. Mg(2+) is required as a cofactor. Phosphorylation of Thr-527 in the dark inactivates the enzyme. Dephosphorylation upon light stimulation reactivates the enzyme. Phosphorylation increases during the first 20 days post-pollination and then remains constant through the 40-day mature seed stage. Reactivation by dephosphorylation during germination is negligible. As to expression, isoform 1 is only expressed in green leaves. Isoform 2 is found in roots, stems, rachis branches, leaf sheaths, green leaves and spikelets. The non-phosphorylated PPDK in mature seeds is endosperm-localized.

The protein resides in the plastid. It is found in the chloroplast. It localises to the cytoplasm. It catalyses the reaction pyruvate + phosphate + ATP = phosphoenolpyruvate + AMP + diphosphate + H(+). Its activity is regulated as follows. Activated by light-induced dephosphorylation. Inhibited by dark-induced phosphorylation. Both reactions are catalyzed by PDRP1. Functionally, formation of phosphoenolpyruvate. The cytoplasmic isoform supports the biosynthetic processes in the nascent endosperm and provides an efficient mechanism for glycolytic ATP synthesis in oxygen depleted tissues. May be involved in regulating the flux of carbon into starch and fatty acids of seeds and in the remobilization of nitrogen reserves in senescing leaves. The sequence is that of Pyruvate, phosphate dikinase 1, chloroplastic (PPDK1) from Oryza sativa subsp. japonica (Rice).